The chain runs to 127 residues: UPF0102 protein Mmwyl1_2395 (127 aa).

This sequence belongs to the UPF0102 family.

In Marinomonas sp. (strain MWYL1), this protein is UPF0102 protein Mmwyl1_2395.